The following is a 699-amino-acid chain: Proline-rich receptor-like protein kinase PERK7 (699 aa).

The disordered stretch occupies residues 1 to 167; the sequence is MAEGQSPENS…TSNSGSNSSS (167 aa). Residues 1 to 172 lie on the Extracellular side of the membrane; sequence MAEGQSPENS…SNSSSNDGLN (172 aa). 2 stretches are compositionally biased toward pro residues: residues 9 to 23 and 43 to 68; these read NSPP…PSPP and SPPP…PPLP. An N-linked (GlcNAc...) asparagine glycan is attached at Asn-70. A compositionally biased stretch (low complexity) spans 100 to 121; it reads PPQQSDNNGNKGNNNENNKGND. Asn-131 carries an N-linked (GlcNAc...) asparagine glycan. Over residues 148 to 158 the composition is skewed to polar residues; it reads HSQPRSLAPPT. N-linked (GlcNAc...) asparagine glycosylation is present at Asn-164. Residues 173-193 traverse the membrane as a helical segment; it reads IGAVIGLVAAAGILFIVMILL. At 194–699 the chain is on the cytoplasmic side; it reads CVCCFRKKKK…SKTTTTNRGI (506 aa). The residue at position 325 (Thr-325) is a Phosphothreonine. In terms of domain architecture, Protein kinase spans 336–615; the sequence is FSKDRLLGQG…VRTLEGDASL (280 aa). ATP contacts are provided by residues 342–350 and Lys-364; that span reads LGQGGFGYV. Tyr-410 carries the post-translational modification Phosphotyrosine. Catalysis depends on Asp-461, which acts as the Proton acceptor. A phosphoserine mark is found at Ser-465 and Ser-494. Thr-495 and Thr-500 each carry phosphothreonine. Tyr-508 bears the Phosphotyrosine mark. Disordered regions lie at residues 609 to 639 and 658 to 699; these read LEGD…DYEM and DYGA…NRGI. Residues 687-699 are compositionally biased toward polar residues; it reads GSTSKTTTTNRGI.

The protein belongs to the protein kinase superfamily. Ser/Thr protein kinase family. In terms of tissue distribution, mostly expressed in flower buds.

Its subcellular location is the cell membrane. It catalyses the reaction L-seryl-[protein] + ATP = O-phospho-L-seryl-[protein] + ADP + H(+). It carries out the reaction L-threonyl-[protein] + ATP = O-phospho-L-threonyl-[protein] + ADP + H(+). In Arabidopsis thaliana (Mouse-ear cress), this protein is Proline-rich receptor-like protein kinase PERK7 (PERK7).